The sequence spans 997 residues: LPS-assembly protein LptD (997 aa).

A signal peptide spans 1-27 (MLYSPLYQSIRLILFGALGLSSLTVSA).

The protein belongs to the LptD family. As to quaternary structure, component of the lipopolysaccharide transport and assembly complex. Interacts with LptE and LptA.

Its subcellular location is the cell outer membrane. Functionally, together with LptE, is involved in the assembly of lipopolysaccharide (LPS) at the surface of the outer membrane. The protein is LPS-assembly protein LptD of Psychrobacter cryohalolentis (strain ATCC BAA-1226 / DSM 17306 / VKM B-2378 / K5).